A 1322-amino-acid chain; its full sequence is Phosphoribosylformylglycinamidine synthase (1322 aa).

Residue Gly300 to Asp311 coordinates ATP. Residues Gln593–Pro608 are compositionally biased toward polar residues. Residues Gln593–Pro613 are disordered. Position 702 (Ala702) interacts with ATP. The Mg(2+) site is built by Asp703, Glu742, Asn746, and Asp915. An ATP-binding site is contributed by Ser917. A Glutamine amidotransferase type-1 domain is found at Val1073–Gly1322. Cys1166 acts as the Nucleophile in catalysis. Active-site residues include His1287 and Glu1289.

In the N-terminal section; belongs to the FGAMS family. Monomer.

It is found in the cytoplasm. The enzyme catalyses N(2)-formyl-N(1)-(5-phospho-beta-D-ribosyl)glycinamide + L-glutamine + ATP + H2O = 2-formamido-N(1)-(5-O-phospho-beta-D-ribosyl)acetamidine + L-glutamate + ADP + phosphate + H(+). It participates in purine metabolism; IMP biosynthesis via de novo pathway; 5-amino-1-(5-phospho-D-ribosyl)imidazole from N(2)-formyl-N(1)-(5-phospho-D-ribosyl)glycinamide: step 1/2. Functionally, phosphoribosylformylglycinamidine synthase involved in the purines biosynthetic pathway. Catalyzes the ATP-dependent conversion of formylglycinamide ribonucleotide (FGAR) and glutamine to yield formylglycinamidine ribonucleotide (FGAM) and glutamate. This chain is Phosphoribosylformylglycinamidine synthase, found in Xylella fastidiosa (strain 9a5c).